Reading from the N-terminus, the 97-residue chain is MSIVIEVKAIPKSKISAITIDKLGRLCIRITSAPENGKANREIIKLIAKTLKLPQANVEIIAGLTIKLKRIRITSSFLNEGELMNALLPSMQQKLFE.

It belongs to the UPF0235 family.

The sequence is that of UPF0235 protein Aasi_0294 from Amoebophilus asiaticus (strain 5a2).